A 503-amino-acid polypeptide reads, in one-letter code: Putative acyl--CoA ligase YdaB (503 aa).

Belongs to the ATP-dependent AMP-binding enzyme family.

The protein is Putative acyl--CoA ligase YdaB (ydaB) of Bacillus subtilis (strain 168).